A 568-amino-acid polypeptide reads, in one-letter code: MPHAPARSGDAMSAAAPPCCTSLLGLSLSMFVAPCALAATPLEGAVVSAPAPTPPTPDLAYPELFQAVQRGELFDDQKHFVDFLPLRDPALINADYLAQHEHAGFDLRKFVDANFEESPPVQTDAIRQDTALREHIDALWPKLVRSQTNVPAHSSLLALPHPYVVPGGRFREVYYWDSYFTMLGLVKSGETTLSRQMLDNFAYLIDTYGHIPNGNRTYYLSRSQPPLFSYMVELQAGVEGEAVYQRYLPQLQKEYAYWMQGGDDLQPGQAARHVVRLADGSVLNRYWDERDTPRPEAWLHDTRTAAEAHDRPAADVYRDLRAGAESGWDYTSRWLADGKTLSTIRTTAIVPIDLNSLLYHLERTLAQACAHTGTACSQDYAALAQQRKQAIDAHLWNAAGYYADYDWQTRTLSNQVTAAALYPLFAGLASDDHAKRTATSVRARLLRPGGLATTALKTGQQWDEPNGWAPLQWVAVDGLRRYGEDGLARTIGERFLTQVQALFAREHKLVEKYGLDADAAGGGGGEYALQDGFGWTNGVTLMLLNLYPSQGATQAPAKTKRKPEPAAP.

Residues 1-38 (MPHAPARSGDAMSAAAPPCCTSLLGLSLSMFVAPCALA) form the signal peptide. Residues R169, 176 to 177 (WD), N213, 222 to 224 (RSQ), 294 to 296 (RPE), and G327 each bind substrate. Residues D329 and E511 each act as proton donor/acceptor in the active site. Substrate is bound at residue E526.

The protein belongs to the glycosyl hydrolase 37 family.

The protein resides in the periplasm. It catalyses the reaction alpha,alpha-trehalose + H2O = alpha-D-glucose + beta-D-glucose. Provides the cells with the ability to utilize trehalose at high osmolarity by splitting it into glucose molecules that can subsequently be taken up by the phosphotransferase-mediated uptake system. The chain is Periplasmic trehalase from Xanthomonas campestris pv. campestris (strain 8004).